Reading from the N-terminus, the 240-residue chain is Enolase-phosphatase E1 (240 aa).

This sequence belongs to the HAD-like hydrolase superfamily. MasA/MtnC family. In terms of assembly, monomer. Mg(2+) is required as a cofactor.

The enzyme catalyses 5-methylsulfanyl-2,3-dioxopentyl phosphate + H2O = 1,2-dihydroxy-5-(methylsulfanyl)pent-1-en-3-one + phosphate. It functions in the pathway amino-acid biosynthesis; L-methionine biosynthesis via salvage pathway; L-methionine from S-methyl-5-thio-alpha-D-ribose 1-phosphate: step 3/6. Its pathway is amino-acid biosynthesis; L-methionine biosynthesis via salvage pathway; L-methionine from S-methyl-5-thio-alpha-D-ribose 1-phosphate: step 4/6. Its function is as follows. Bifunctional enzyme that catalyzes the enolization of 2,3-diketo-5-methylthiopentyl-1-phosphate (DK-MTP-1-P) into the intermediate 2-hydroxy-3-keto-5-methylthiopentenyl-1-phosphate (HK-MTPenyl-1-P), which is then dephosphorylated to form the acireductone 1,2-dihydroxy-3-keto-5-methylthiopentene (DHK-MTPene). In Saccharopolyspora erythraea (strain ATCC 11635 / DSM 40517 / JCM 4748 / NBRC 13426 / NCIMB 8594 / NRRL 2338), this protein is Enolase-phosphatase E1.